The following is a 394-amino-acid chain: Na(+)/H(+) antiporter NhaA (394 aa).

11 helical membrane-spanning segments follow: residues 14–34 (AGGL…NSAL), 59–79 (LLLW…GLEV), 95–115 (VFPA…YLLF), 125–145 (GWAI…ALLG), 154–174 (VFLL…IALF), 179–199 (VSLQ…YMNW), 213–233 (LVLW…GVIV), 254–274 (GLHP…NAGV), 292–312 (IATG…WLAV), 328–348 (IFAV…IASL), and 363–383 (LGIL…LRLV).

This sequence belongs to the NhaA Na(+)/H(+) (TC 2.A.33) antiporter family.

The protein localises to the cell inner membrane. The catalysed reaction is Na(+)(in) + 2 H(+)(out) = Na(+)(out) + 2 H(+)(in). Its function is as follows. Na(+)/H(+) antiporter that extrudes sodium in exchange for external protons. The protein is Na(+)/H(+) antiporter NhaA of Yersinia pestis bv. Antiqua (strain Antiqua).